A 622-amino-acid polypeptide reads, in one-letter code: MTDRPDHIDSRVWELSETQEDWITQVHGHVRRVVECWKYTICCLISNMHTHRGAPQYDVFKWQDRSTIEWICSKKKVQYPERDTPDLYDNERAVAYKVLLVSDLSDHSPTSGIYHDLAFNLEGEAEESCALVLRGSQLQDIKGFLCRALEWVVSNNLTQEVVETISGEAKLQFSVGTTFRTLLKRDTDWDVIPTPRVEPNVPRIEGRRWTQMKKLPLLKEKEGPPSPWRALLLGADSEYIVCPPGTDQEAISWIHSQSEIECIRESKSTPASVITCLTSSLQSFAEGNPVRSRIHEDIIAFGINKKQEKKQSASSSASGEWKRAEYQVEEMSLPPWVEEEMVLLRSDQEDNWIELEKNAIYTEVDGVAEGLVDKYIEIVGRTKVASVIEKWQIAATRTFSQLHTDRSRITACPIITRDPSGNCQFWGMVLLGPHHVKRDTDNAPLLIAEIMGEDTEEKYPKHSVFSLKVEGKQFLLSLKITSFSRNKLYTFSNIRRVLIQPASIYSQVVLSRAAENNSLNLEVNPEIQLYLEGAQRGMTLYQWVRMILCLEFLMAIYNNPQMEGFLANMRRLHMSRHAMMERRQVFLPFGSRPEDKVNECIINNPIVAYLAKGWNSMPNVYY.

The protein belongs to the influenza viruses PA family. RNA polymerase is composed of three subunits: PA, PB1 and PB2.

Its subcellular location is the virion. It is found in the host nucleus. Its function is as follows. subunit of the RNA-dependent RNA polymerase which is responsible for replication and transcription of virus RNA segments. The transcription of viral mRNAs occurs by a unique mechanism called cap-snatching. 5' methylated caps of cellular mRNAs are cleaved after 10-13 nucleotides by PA. In turn, these short capped RNAs are used as primers by PB1 for transcription of viral mRNAs. During virus replication, PB1 initiates RNA synthesis and copy vRNA into complementary RNA (cRNA) which in turn serves as a template for the production of more vRNAs. The sequence is that of Polymerase acidic protein from Thogoto virus (isolate SiAr 126) (Tho).